Reading from the N-terminus, the 172-residue chain is Co-chaperone protein HscB (172 aa).

Residues Asp-2 to Leu-74 enclose the J domain.

It belongs to the HscB family. As to quaternary structure, interacts with HscA and stimulates its ATPase activity. Interacts with IscU.

Functionally, co-chaperone involved in the maturation of iron-sulfur cluster-containing proteins. Seems to help targeting proteins to be folded toward HscA. This is Co-chaperone protein HscB from Pectobacterium carotovorum subsp. carotovorum (strain PC1).